The sequence spans 220 residues: Octanoyltransferase (220 aa).

Residues 29 to 217 enclose the BPL/LPL catalytic domain; it reads GRAPEMIWLL…CFEETFGPLP (189 aa). Substrate-binding positions include 68–75, 148–150, and 161–163; these read RGGQYTYH, AIG, and GLS. The active-site Acyl-thioester intermediate is the Cys-179.

It belongs to the LipB family.

It localises to the cytoplasm. It carries out the reaction octanoyl-[ACP] + L-lysyl-[protein] = N(6)-octanoyl-L-lysyl-[protein] + holo-[ACP] + H(+). It functions in the pathway protein modification; protein lipoylation via endogenous pathway; protein N(6)-(lipoyl)lysine from octanoyl-[acyl-carrier-protein]: step 1/2. Its function is as follows. Catalyzes the transfer of endogenously produced octanoic acid from octanoyl-acyl-carrier-protein onto the lipoyl domains of lipoate-dependent enzymes. Lipoyl-ACP can also act as a substrate although octanoyl-ACP is likely to be the physiological substrate. This chain is Octanoyltransferase, found in Dinoroseobacter shibae (strain DSM 16493 / NCIMB 14021 / DFL 12).